A 226-amino-acid polypeptide reads, in one-letter code: UPF0758 protein SPJ_1027 (226 aa).

One can recognise an MPN domain in the interval 103-225; sequence SILSSQKLAK…YFSYREKTDL (123 aa). Residues His174, His176, and Asp187 each contribute to the Zn(2+) site. The JAMM motif motif lies at 174 to 187; the sequence is HNHPSGAVAPSQND.

This sequence belongs to the UPF0758 family.

This chain is UPF0758 protein SPJ_1027, found in Streptococcus pneumoniae (strain JJA).